The following is a 130-amino-acid chain: Small ribosomal subunit protein uS8 (130 aa).

The protein belongs to the universal ribosomal protein uS8 family. As to quaternary structure, part of the 30S ribosomal subunit.

Its function is as follows. One of the primary rRNA binding proteins, it binds directly to 16S rRNA central domain where it helps coordinate assembly of the platform of the 30S subunit. In Pyrobaculum calidifontis (strain DSM 21063 / JCM 11548 / VA1), this protein is Small ribosomal subunit protein uS8.